The following is a 345-amino-acid chain: NADH-quinone oxidoreductase subunit 8 (345 aa).

Transmembrane regions (helical) follow at residues 15–35 (MLLQ…FMVY), 82–102 (FVYF…FVVI), 115–135 (VGIL…IMGG), 161–181 (LGLI…TAIV), 190–210 (LLNW…VSAL), 240–262 (YLLF…SLLF), 278–298 (WWMV…KAIV), and 309–329 (IGWK…AILA).

Belongs to the complex I subunit 1 family. NDH-1 is composed of at least 14 different subunits, Nqo1 to Nqo14. The complex has a L-shaped structure, with the hydrophobic arm (subunits Nqo7, Nqo8, Nqo10 to Nqo14) embedded in the inner membrane and the hydrophilic peripheral arm (subunits Nqo1 to Nqo6, Nqo9) protruding into the bacterial cytoplasm. The hydrophilic domain contains all the redox centers.

Its subcellular location is the cell inner membrane. It carries out the reaction a quinone + NADH + 5 H(+)(in) = a quinol + NAD(+) + 4 H(+)(out). NDH-1 shuttles electrons from NADH, via FMN and iron-sulfur (Fe-S) centers, to quinones in the respiratory chain. The immediate electron acceptor for the enzyme in this species is believed to be ubiquinone. Couples the redox reaction to proton translocation (for every two electrons transferred, four hydrogen ions are translocated across the cytoplasmic membrane), and thus conserves the redox energy in a proton gradient. The sequence is that of NADH-quinone oxidoreductase subunit 8 from Paracoccus denitrificans.